The primary structure comprises 438 residues: Trigger factor (438 aa).

Residues 160–245 form the PPIase FKBP-type domain; sequence DDKVTIDFVG…VKKIQQAELP (86 aa).

This sequence belongs to the FKBP-type PPIase family. Tig subfamily.

The protein resides in the cytoplasm. The enzyme catalyses [protein]-peptidylproline (omega=180) = [protein]-peptidylproline (omega=0). Its function is as follows. Involved in protein export. Acts as a chaperone by maintaining the newly synthesized protein in an open conformation. Functions as a peptidyl-prolyl cis-trans isomerase. This chain is Trigger factor, found in Francisella tularensis subsp. mediasiatica (strain FSC147).